Reading from the N-terminus, the 181-residue chain is Putative ankyrin repeat protein RF_0782 (181 aa).

ANK repeat units lie at residues 24–53 (YHYS…DINF) and 54–83 (GSTP…NTQI).

This Rickettsia felis (strain ATCC VR-1525 / URRWXCal2) (Rickettsia azadi) protein is Putative ankyrin repeat protein RF_0782.